We begin with the raw amino-acid sequence, 222 residues long: Probable glutathione-independent glyoxalase hsp3104 (222 aa).

Residues Cys-124, His-125, and Glu-155 contribute to the active site.

It belongs to the peptidase C56 family. HSP31-like subfamily.

The protein resides in the cytoplasm. It catalyses the reaction methylglyoxal + H2O = (R)-lactate + H(+). In terms of biological role, catalyzes the conversion of methylglyoxal (MG) to D-lactate in a single glutathione (GSH)-independent step. May play a role in detoxifying endogenously produced glyoxals. Involved in protection against reactive oxygen species (ROS). The protein is Probable glutathione-independent glyoxalase hsp3104 of Schizosaccharomyces pombe (strain 972 / ATCC 24843) (Fission yeast).